Here is a 115-residue protein sequence, read N- to C-terminus: ATP synthase subunit g, mitochondrial (115 aa).

Position 1 is an N-acetylmethionine (M1). S3 and S62 each carry phosphoserine.

It belongs to the ATPase g subunit family. As to quaternary structure, F-type ATPases have 2 components, CF(1) - the catalytic core - and CF(0) - the membrane proton channel. In yeast, the dimeric form of ATP synthase consists of 17 polypeptides: alpha, beta, gamma, delta, epsilon, 4 (B), 5 (OSCP), 6 (A), 8, 9 (C), d, E (Tim11), f, g, h, i/j and k. In terms of processing, phosphorylation on Ser-62 impairs ATP synthase dimerization.

Its subcellular location is the mitochondrion membrane. Its function is as follows. Mitochondrial membrane ATP synthase (F(1)F(0) ATP synthase or Complex V) produces ATP from ADP in the presence of a proton gradient across the membrane which is generated by electron transport complexes of the respiratory chain. F-type ATPases consist of two structural domains, F(1) - containing the extramembraneous catalytic core, and F(0) - containing the membrane proton channel, linked together by a central stalk and a peripheral stalk. During catalysis, ATP synthesis in the catalytic domain of F(1) is coupled via a rotary mechanism of the central stalk subunits to proton translocation. Part of the complex F(0) domain. Minor subunit located with subunit a in the membrane. The protein is ATP synthase subunit g, mitochondrial (ATP20) of Saccharomyces cerevisiae (strain ATCC 204508 / S288c) (Baker's yeast).